We begin with the raw amino-acid sequence, 108 residues long: uncharacterized protein (108 aa).

Transmembrane regions (helical) follow at residues 4–24, 46–66, and 81–101; these read IIFL…FFSM, GMMV…IFIG, and IMAI…WFVL.

Its subcellular location is the cell membrane. This is an uncharacterized protein from Escherichia coli O157:H7.